A 474-amino-acid polypeptide reads, in one-letter code: Light-independent protochlorophyllide reductase subunit N (474 aa).

[4Fe-4S] cluster is bound by residues C22, C47, and C107.

Belongs to the BchN/ChlN family. As to quaternary structure, protochlorophyllide reductase is composed of three subunits; ChlL, ChlN and ChlB. Forms a heterotetramer of two ChlB and two ChlN subunits. The cofactor is [4Fe-4S] cluster.

It is found in the plastid. Its subcellular location is the chloroplast. The catalysed reaction is chlorophyllide a + oxidized 2[4Fe-4S]-[ferredoxin] + 2 ADP + 2 phosphate = protochlorophyllide a + reduced 2[4Fe-4S]-[ferredoxin] + 2 ATP + 2 H2O. The protein operates within porphyrin-containing compound metabolism; chlorophyll biosynthesis (light-independent). Its function is as follows. Component of the dark-operative protochlorophyllide reductase (DPOR) that uses Mg-ATP and reduced ferredoxin to reduce ring D of protochlorophyllide (Pchlide) to form chlorophyllide a (Chlide). This reaction is light-independent. The NB-protein (ChlN-ChlB) is the catalytic component of the complex. This Physcomitrium patens (Spreading-leaved earth moss) protein is Light-independent protochlorophyllide reductase subunit N.